We begin with the raw amino-acid sequence, 193 residues long: NADH-quinone oxidoreductase subunit B (193 aa).

[4Fe-4S] cluster contacts are provided by Cys72, Cys73, Cys137, and Cys167.

This sequence belongs to the complex I 20 kDa subunit family. NDH-1 is composed of 14 different subunits. Subunits NuoB, C, D, E, F, and G constitute the peripheral sector of the complex. [4Fe-4S] cluster serves as cofactor.

It is found in the cell inner membrane. The catalysed reaction is a quinone + NADH + 5 H(+)(in) = a quinol + NAD(+) + 4 H(+)(out). Its function is as follows. NDH-1 shuttles electrons from NADH, via FMN and iron-sulfur (Fe-S) centers, to quinones in the respiratory chain. The immediate electron acceptor for the enzyme in this species is believed to be ubiquinone. Couples the redox reaction to proton translocation (for every two electrons transferred, four hydrogen ions are translocated across the cytoplasmic membrane), and thus conserves the redox energy in a proton gradient. This is NADH-quinone oxidoreductase subunit B from Phenylobacterium zucineum (strain HLK1).